The following is a 215-amino-acid chain: Small ribosomal subunit protein uS3 (215 aa).

One can recognise a KH type-2 domain in the interval 38–107; sequence IRDYIKKTYH…KFQLNIEEVK (70 aa).

It belongs to the universal ribosomal protein uS3 family. Part of the 30S ribosomal subunit. Forms a tight complex with proteins S10 and S14.

In terms of biological role, binds the lower part of the 30S subunit head. Binds mRNA in the 70S ribosome, positioning it for translation. This is Small ribosomal subunit protein uS3 from Kosmotoga olearia (strain ATCC BAA-1733 / DSM 21960 / TBF 19.5.1).